Here is a 555-residue protein sequence, read N- to C-terminus: Glutamine--tRNA ligase (555 aa).

Residues 34-44 (PEPNGYLHIGH) carry the 'HIGH' region motif. Residues 35–37 (EPN) and 41–47 (HIGHAKS) contribute to the ATP site. L-glutamine-binding residues include D67 and Y212. ATP is bound by residues T231, 261–262 (RL), and 269–271 (MSK). Residues 268–272 (IMSKR) carry the 'KMSKS' region motif.

It belongs to the class-I aminoacyl-tRNA synthetase family. In terms of assembly, monomer.

The protein resides in the cytoplasm. It carries out the reaction tRNA(Gln) + L-glutamine + ATP = L-glutaminyl-tRNA(Gln) + AMP + diphosphate. In Erwinia tasmaniensis (strain DSM 17950 / CFBP 7177 / CIP 109463 / NCPPB 4357 / Et1/99), this protein is Glutamine--tRNA ligase.